Here is a 190-residue protein sequence, read N- to C-terminus: Dirigent protein 15 (190 aa).

The first 19 residues, 1–19 (MKSTLIIFFTLCLSMAVMA), serve as a signal peptide directing secretion. N-linked (GlcNAc...) asparagine glycans are attached at residues Asn-63 and Asn-128.

It belongs to the plant dirigent protein family. Homodimer.

It localises to the secreted. The protein resides in the extracellular space. Its subcellular location is the apoplast. In terms of biological role, dirigent proteins impart stereoselectivity on the phenoxy radical-coupling reaction, yielding optically active lignans from two molecules of coniferyl alcohol in the biosynthesis of lignans, flavonolignans, and alkaloids and thus plays a central role in plant secondary metabolism. The chain is Dirigent protein 15 (DIR15) from Arabidopsis thaliana (Mouse-ear cress).